Here is a 442-residue protein sequence, read N- to C-terminus: L-seryl-tRNA(Sec) selenium transferase (442 aa).

The residue at position 284 (Lys-284) is an N6-(pyridoxal phosphate)lysine.

It belongs to the SelA family. It depends on pyridoxal 5'-phosphate as a cofactor.

The protein resides in the cytoplasm. It carries out the reaction L-seryl-tRNA(Sec) + selenophosphate + H(+) = L-selenocysteinyl-tRNA(Sec) + phosphate. The protein operates within aminoacyl-tRNA biosynthesis; selenocysteinyl-tRNA(Sec) biosynthesis; selenocysteinyl-tRNA(Sec) from L-seryl-tRNA(Sec) (bacterial route): step 1/1. Converts seryl-tRNA(Sec) to selenocysteinyl-tRNA(Sec) required for selenoprotein biosynthesis. This Campylobacter fetus subsp. fetus (strain 82-40) protein is L-seryl-tRNA(Sec) selenium transferase.